The sequence spans 1198 residues: Tetratricopeptide repeat protein 17 (1198 aa).

The TPR 1 repeat unit spans residues 295–328 (FTSYYTLGNIYAMLGEYNHSVLCYDHALQAKPGF). Residues 340–382 (CQQKLEQKLEAQHRSLQRTLNELKEYQKQHDHYLRQQEILEKH) are a coiled coil. TPR repeat units follow at residues 619 to 652 (WLILNEAGLYWRAVGNSTFAIACLQRALNLAPVQ) and 689 to 722 (PLTFLSLGNAYLALKNVSGALEAFRQALKLSTKC). Disordered regions lie at residues 774–793 (LDAAAEEPSGHGADEDPVLS) and 902–954 (VKKP…YQSL). Basic residues predominate over residues 902 to 914 (VKKPKGDHKKPPG). 3 TPR repeats span residues 1071 to 1105 (SWVLSSMAALYWRVKGQGKKAIDCLRQALHYAPHQ), 1108 to 1141 (DVPLISLANILHNAKLWNDAVIVATMAVEIAPHF), and 1142 to 1175 (AVNHFTLGNVYVAMEEFEKALVWYESTLKLQPEF).

It belongs to the TTC17 family. Interacts with CATIP.

It localises to the cytoplasm. It is found in the cell membrane. The protein localises to the cytoskeleton. Its function is as follows. Plays a role in primary ciliogenesis by modulating actin polymerization. The polypeptide is Tetratricopeptide repeat protein 17 (Ttc17) (Mus musculus (Mouse)).